Here is a 147-residue protein sequence, read N- to C-terminus: Large ribosomal subunit protein uL15 (147 aa).

The segment covering 1-10 has biased composition (polar residues); it reads MYLNTLSPNS. A disordered region spans residues 1-48; sequence MYLNTLSPNSKSHKKSKRVGRGIGSGFGKTSGRGHKGQKSRSGCKIRR. A compositionally biased stretch (basic residues) spans 11–20; sequence KSHKKSKRVG. The segment covering 21–31 has biased composition (gly residues); sequence RGIGSGFGKTS. The segment covering 32–47 has biased composition (basic residues); that stretch reads GRGHKGQKSRSGCKIR.

This sequence belongs to the universal ribosomal protein uL15 family. Part of the 50S ribosomal subunit.

Functionally, binds to the 23S rRNA. In Buchnera aphidicola subsp. Baizongia pistaciae (strain Bp), this protein is Large ribosomal subunit protein uL15.